A 506-amino-acid chain; its full sequence is MDEYQVYLELDRSRNHDFLYPLIFREYIYGLAYGHDLNRSVFVENISYDNKSSLLIVKRLITRMYQQTYLIIFPNDSNKNPFWGYNNNFYSQIISEGFVIVVEIPFFLQFSSSLEETKIVKYYKNLRSIHSIFPLFEDKFTYLNHESDIRIPYPIHLEILVQILRYWIKDVPFLHLLRLFFYYYCNWNSLITPQKSISTFSKNNPRFFLFLFNFYVWEYESIFLFLRNKSTHLRLKSFRVLIERISFYAKVEHLVEVFAKDFSYTLSFFKDPFIHYVRYQGKSILVSKNMPLLMNKWKSYFIHLWQCHFDVWSQPRTIHIKQLSKHSFYFLGYFLNVQLNLSVVRSQMLQNSFLTEIVMKKLDTIVPIILLIRSLAKAKFCNVLGHPISKPVWADLSDFDIIDRFLWICRNFSQYYNGSSKKKSLYRIKYILRLSCIKTLSRKHKSTVRAFLKRLDSEKLLEEFFTEEEDIFSLIFSKTSSTLQRLYRGRIWYLDLLFSNDLINYS.

It belongs to the intron maturase 2 family. MatK subfamily.

Its subcellular location is the plastid. It localises to the chloroplast. In terms of biological role, usually encoded in the trnK tRNA gene intron. Probably assists in splicing its own and other chloroplast group II introns. In Austrosteenisia blackii (Blood vine), this protein is Maturase K.